The following is a 1127-amino-acid chain: Testis-expressed protein 2 (1127 aa).

Disordered stretches follow at residues 1-27 (MTSL…HVQR) and 133-279 (AVSP…SFFK). The span at 133-187 (AVSPGSSSSGPLASSPSVSSLSEQKTSSSSPLSSPSKSPILSSSASTSTLSSAKP) shows a compositional bias: low complexity. Residue Ser-196 is modified to Phosphoserine. Positions 249 to 275 (QFTQPRNTGGDSKTAPSSPLTSPSDTR) are enriched in polar residues. A Phosphothreonine modification is found at Thr-262. Ser-265, Ser-266, Ser-270, and Ser-295 each carry phosphoserine. Asn-330 carries an N-linked (GlcNAc...) asparagine glycan. Residues 348–386 (EEECDSEGDGYGSDSNIPRSDHPKSTGEPTREIELKSSQ) are disordered. Residues 366–382 (RSDHPKSTGEPTREIEL) are compositionally biased toward basic and acidic residues. 2 helical membrane-spanning segments follow: residues 475–495 (TLGF…PHYV) and 497–517 (GLFL…WFFT). Disordered regions lie at residues 648 to 685 (KAQT…QRDQ), 715 to 764 (KKSS…QKEL), 786 to 816 (QESR…PPSE), and 947 to 980 (DEES…GYVG). Over residues 650-670 (QTDKETSEEKPPAEGSEDPKK) the composition is skewed to basic and acidic residues. Residues Ser-732, Ser-738, Ser-744, Ser-748, Ser-751, Ser-798, and Ser-815 each carry the phosphoserine modification. Over residues 735 to 750 (NSPSGHLTHSRSSSKG) the composition is skewed to polar residues. Residues 787–804 (ESRSPQRSPLQSAESSPT) are compositionally biased toward polar residues. Positions 816-1101 (EEEEQEAWVN…MPNMDDVYIT (286 aa)) constitute an SMP-LTD domain. Over residues 947-962 (DEESSSAGSSEEDDAP) the composition is skewed to acidic residues.

Its subcellular location is the endoplasmic reticulum membrane. The protein localises to the nucleus membrane. During endoplasmic reticulum (ER) stress or when cellular ceramide levels increase, may induce contacts between the ER and medial-Golgi complex to facilitate non-vesicular transport of ceramides from the ER to the Golgi complex where they are converted to complex sphingolipids, preventing toxic ceramide accumulation. This is Testis-expressed protein 2 (TEX2) from Homo sapiens (Human).